The sequence spans 306 residues: Ribonuclease HIII (306 aa).

Residues 87–302 (WSVVGSDEVG…TKKAEALAKK (216 aa)) form the RNase H type-2 domain. A divalent metal cation-binding residues include D93, E94, and D196.

It belongs to the RNase HII family. RnhC subfamily. Requires Mn(2+) as cofactor. The cofactor is Mg(2+).

It is found in the cytoplasm. The catalysed reaction is Endonucleolytic cleavage to 5'-phosphomonoester.. Functionally, endonuclease that specifically degrades the RNA of RNA-DNA hybrids. This is Ribonuclease HIII from Exiguobacterium sibiricum (strain DSM 17290 / CCUG 55495 / CIP 109462 / JCM 13490 / 255-15).